Reading from the N-terminus, the 196-residue chain is Peptidyl-tRNA hydrolase (196 aa).

Tyr-17 lines the tRNA pocket. The active-site Proton acceptor is His-22. TRNA contacts are provided by Tyr-69, Asn-71, and Asn-117.

The protein belongs to the PTH family. In terms of assembly, monomer.

It localises to the cytoplasm. It carries out the reaction an N-acyl-L-alpha-aminoacyl-tRNA + H2O = an N-acyl-L-amino acid + a tRNA + H(+). Functionally, hydrolyzes ribosome-free peptidyl-tRNAs (with 1 or more amino acids incorporated), which drop off the ribosome during protein synthesis, or as a result of ribosome stalling. Catalyzes the release of premature peptidyl moieties from peptidyl-tRNA molecules trapped in stalled 50S ribosomal subunits, and thus maintains levels of free tRNAs and 50S ribosomes. This is Peptidyl-tRNA hydrolase from Pseudarthrobacter chlorophenolicus (strain ATCC 700700 / DSM 12829 / CIP 107037 / JCM 12360 / KCTC 9906 / NCIMB 13794 / A6) (Arthrobacter chlorophenolicus).